The following is a 264-amino-acid chain: Expansin-B3 (264 aa).

An N-terminal signal peptide occupies residues 1 to 25 (MQLFPVMLATLCIVLQLLIGSSALA). The 109-residue stretch at 54-162 (GGACGYGTLV…RRTACKYRGK (109 aa)) folds into the Expansin-like EG45 domain. Intrachain disulfides connect Cys-57-Cys-86, Cys-89-Cys-157, and Cys-94-Cys-100. Residues 175-256 (FWLSLLVEFE…NWAPKATYSS (82 aa)) enclose the Expansin-like CBD domain.

It belongs to the expansin family. Expansin B subfamily.

It is found in the secreted. Its subcellular location is the cell wall. It localises to the membrane. In terms of biological role, may cause loosening and extension of plant cell walls by disrupting non-covalent bonding between cellulose microfibrils and matrix glucans. No enzymatic activity has been found. This is Expansin-B3 (EXPB3) from Arabidopsis thaliana (Mouse-ear cress).